The following is an 879-amino-acid chain: Metabotropic glutamate receptor 3 (879 aa).

The N-terminal stretch at 1-22 is a signal peptide; the sequence is MKMLTRLQILMLALFSKGFLLS. Residues 23-576 are Extracellular-facing; that stretch reads LGDHNFMRRE…EDYIKWEDAW (554 aa). Cys-57 and Cys-99 form a disulfide bridge. L-glutamate-binding positions include Arg-68, Ser-151, and 172-174; that span reads AST. Asn-209 carries an N-linked (GlcNAc...) asparagine glycan. An L-glutamate-binding site is contributed by Tyr-222. 7 disulfides stabilise this stretch: Cys-240-Cys-527, Cys-361-Cys-373, Cys-412-Cys-419, Cys-509-Cys-528, Cys-513-Cys-531, Cys-534-Cys-546, and Cys-549-Cys-562. N-linked (GlcNAc...) asparagine glycosylation occurs at Asn-292. Asp-301 is a binding site for L-glutamate. L-glutamate is bound at residue Lys-389. N-linked (GlcNAc...) asparagine glycans are attached at residues Asn-414 and Asn-439. Residues 577 to 599 form a helical membrane-spanning segment; sequence AIGPVTIACLGFLCTCIVITVFI. Residues 600–613 are Cytoplasmic-facing; the sequence is KHNNTPLVKASGRE. Residues 614 to 634 form a helical membrane-spanning segment; it reads LCYILLFGVSLSYCMTFFFIA. Residues 635 to 645 are Extracellular-facing; it reads KPSPVICALRR. A helical membrane pass occupies residues 646-664; it reads LGLGTSFAICYSALLTKTN. At 665–688 the chain is on the cytoplasmic side; that stretch reads CIARIFDGVKNGAQRPKFISPSSQ. The chain crosses the membrane as a helical span at residues 689–709; sequence VFICLGLILVQIVMVSVWLIL. Residues 710-734 are Extracellular-facing; that stretch reads ETPGTRRYTLPEKRETVILKCNVKD. A helical transmembrane segment spans residues 735 to 756; that stretch reads SSMLISLTYDVVLVILCTVYAF. Residues 757 to 769 are Cytoplasmic-facing; the sequence is KTRKCPENFNEAK. The helical transmembrane segment at 770–792 threads the bilayer; sequence FIGFTMYTTCIIWLAFLPIFYVT. The Extracellular portion of the chain corresponds to 793 to 802; that stretch reads SSDYRVQTTT. A helical transmembrane segment spans residues 803-828; the sequence is MCISVSLSGFVVLGCLFAPKVHIVLF. Over 829–879 the chain is Cytoplasmic; it reads QPQKNVVTHRLHLNRFSVSGTATTYSQSSASTYVPTVCNGREVLDSTTSSL.

This sequence belongs to the G-protein coupled receptor 3 family. Interacts with TAMALIN. As to expression, is widely distributed in the CNS. Predominant expression is seen in the neuronal cells of the cerebral cortex, dentate gyrus, and glial cells throughout brain regions.

It localises to the cell membrane. Its function is as follows. G-protein coupled receptor for glutamate. Ligand binding causes a conformation change that triggers signaling via guanine nucleotide-binding proteins (G proteins) and modulates the activity of down-stream effectors. Signaling inhibits adenylate cyclase activity. This is Metabotropic glutamate receptor 3 (Grm3) from Rattus norvegicus (Rat).